Here is a 362-residue protein sequence, read N- to C-terminus: Homoisocitrate dehydrogenase (362 aa).

79 to 81 (VQS) provides a ligand contact to NADH. S81 provides a ligand contact to (2R,3S)-homoisocitrate. Phosphoserine is present on residues S81 and S91. R97, R107, R126, Y133, K196, and N198 together coordinate (2R,3S)-homoisocitrate. N198 contributes to the NADH binding site. Mg(2+)-binding residues include D232, D256, and D260. NADH-binding positions include 289–293 (GSAPD) and N301.

The protein belongs to the isocitrate and isopropylmalate dehydrogenases family. Requires Mg(2+) as cofactor.

The protein localises to the cytoplasm. It catalyses the reaction (2R,3S)-homoisocitrate + NAD(+) = 2-oxoadipate + CO2 + NADH. Its pathway is amino-acid biosynthesis; L-lysine biosynthesis via AAA pathway; L-alpha-aminoadipate from 2-oxoglutarate: step 4/5. The sequence is that of Homoisocitrate dehydrogenase (lys12) from Schizosaccharomyces pombe (strain 972 / ATCC 24843) (Fission yeast).